Consider the following 270-residue polypeptide: Glucan endo-1,3-beta-glucosidase (270 aa).

The N-terminal stretch at 1-18 is a signal peptide; the sequence is MNAFTFPLLLAFCAFAHG. Positions 22–270 constitute a GH16 domain; it reads LDWEDEFNGG…VEYVKKWTWN (249 aa). Catalysis depends on glutamate 137, which acts as the Nucleophile. Glutamate 142 functions as the Proton donor in the catalytic mechanism.

Belongs to the glycosyl hydrolase 16 family.

The protein localises to the secreted. The catalysed reaction is Hydrolysis of (1-&gt;3)-beta-D-glucosidic linkages in (1-&gt;3)-beta-D-glucans.. With respect to regulation, ca(2+) does not affect the enzyme activity nor the thermostability. Other cations, such as Mg(2+), Mn(2+), Cu(2+), Zn(2+), Ag(+) or Hg(2+) do not cause any serious adverse effect on the activity. Also no significant change in the activity in response to the addition of 1 mM EDTA. In terms of biological role, hydrolyzes laminarin majorily to glucose (G1), laminaribiose (L2), laminaritriose (L3), laminaritetraose (L4) and laminaripentaose (L5). Hydrolyzes laminarioligosaccharides L3, L4, L5 and laminarihexaose (L6) to G1, L2 and L3. Hardly hydrolyzes L2. Does not hydrolyze lichenan, pustulan, carboxymethyl cellulose, locust bean gum or soluble starch. The polypeptide is Glucan endo-1,3-beta-glucosidase (Cryptopygus antarcticus (Antarctic springtail)).